The chain runs to 525 residues: MGTISLCIGVCAFEGANTSTSFYKLVYTAILSYSIQDLLPEQDMKDLCQKVTLTRHRSWGLDNLHLVKDWRTVNEGKGQKEYCNRLTQCSSTKSKIFQCIECGRNFSWRSILTEHKRIHTGEKPYKCEECGKVFNRCSNLTKHKRIHTGEKPYKCDECGKVFNWWSQLTNHKKIHTGEKPYKCDECDKVFNWWSQLTSHKKIHSGEKPYPCEECGKAFTQFSNLTQHKRIHTGEKPYKCKECCKAFNKFSNLTQHKRIHTGEKPYKCEECGNVFNECSHLTRHRRIHTGEKPYKCEECGKAFTQFASLTRHKRIHTGEKPYQCEECGKTFNRCSHLSSHKRIHTGEKPYKCEECGRTFTQFSNLTQHKRIHTGEKPYKCKECGKAFNKFSSLTQHRRIHTGVKPYKCEECGKVFKQCSHLTSHKRIHTGEKPYKCKECGKAFYQSSILSKHKRIHTEEKPYKCEECGKAFNQFSSLTRHKRIHTGEKRYKCKECGKGFYQSSIHSKYKRIYTGEEPDKCKKCGSL.

14 C2H2-type zinc fingers span residues 97–119, 125–147, 153–175, 181–203, 209–231, 237–259, 265–287, 293–315, 321–343, 349–371, 377–399, 405–427, 433–455, and 461–483; these read FQCI…KRIH, YKCE…KRIH, YKCD…KKIH, YPCE…KRIH, YKCK…KRIH, YKCE…RRIH, YQCE…KRIH, and YKCK…RRIH. The C2H2-type 15; degenerate zinc finger occupies 489 to 511; sequence YKCKECGKGFYQSSIHSKYKRIY.

This sequence belongs to the krueppel C2H2-type zinc-finger protein family.

The protein resides in the nucleus. May be involved in transcriptional regulation. This is Zinc finger protein 678 (ZNF678) from Homo sapiens (Human).